The chain runs to 438 residues: Thymidine phosphorylase (438 aa).

It belongs to the thymidine/pyrimidine-nucleoside phosphorylase family. As to quaternary structure, homodimer.

The enzyme catalyses thymidine + phosphate = 2-deoxy-alpha-D-ribose 1-phosphate + thymine. The protein operates within pyrimidine metabolism; dTMP biosynthesis via salvage pathway; dTMP from thymine: step 1/2. The enzymes which catalyze the reversible phosphorolysis of pyrimidine nucleosides are involved in the degradation of these compounds and in their utilization as carbon and energy sources, or in the rescue of pyrimidine bases for nucleotide synthesis. In Sinorhizobium fredii (strain NBRC 101917 / NGR234), this protein is Thymidine phosphorylase.